We begin with the raw amino-acid sequence, 224 residues long: UPF0758 protein VFMJ11_0123 (224 aa).

In terms of domain architecture, MPN spans 102–224 (ALTSPEHTKR…IVSFAERGWI (123 aa)). Residues H173, H175, and D186 each coordinate Zn(2+). The JAMM motif signature appears at 173-186 (HNHPSGVAEPSQAD).

Belongs to the UPF0758 family.

This chain is UPF0758 protein VFMJ11_0123, found in Aliivibrio fischeri (strain MJ11) (Vibrio fischeri).